The following is a 181-amino-acid chain: Endoribonuclease YbeY (181 aa).

The Zn(2+) site is built by His115, His119, and His125.

This sequence belongs to the endoribonuclease YbeY family. It depends on Zn(2+) as a cofactor.

It localises to the cytoplasm. Functionally, single strand-specific metallo-endoribonuclease involved in late-stage 70S ribosome quality control and in maturation of the 3' terminus of the 16S rRNA. The chain is Endoribonuclease YbeY from Bifidobacterium adolescentis (strain ATCC 15703 / DSM 20083 / NCTC 11814 / E194a).